Reading from the N-terminus, the 368-residue chain is Quinolinate synthase (368 aa).

Iminosuccinate-binding residues include H46 and S63. C110 contributes to the [4Fe-4S] cluster binding site. Iminosuccinate contacts are provided by residues 141-143 (YVN) and S162. C230 lines the [4Fe-4S] cluster pocket. Residues 256–258 (HPE) and T273 contribute to the iminosuccinate site. C320 lines the [4Fe-4S] cluster pocket.

It belongs to the quinolinate synthase family. Type 3 subfamily. Requires [4Fe-4S] cluster as cofactor.

The protein resides in the cytoplasm. The catalysed reaction is iminosuccinate + dihydroxyacetone phosphate = quinolinate + phosphate + 2 H2O + H(+). The protein operates within cofactor biosynthesis; NAD(+) biosynthesis; quinolinate from iminoaspartate: step 1/1. Functionally, catalyzes the condensation of iminoaspartate with dihydroxyacetone phosphate to form quinolinate. The protein is Quinolinate synthase of Bacillus cereus (strain B4264).